The following is a 100-amino-acid chain: Integration host factor subunit alpha (100 aa).

It belongs to the bacterial histone-like protein family. Heterodimer of an alpha and a beta chain.

Its function is as follows. This protein is one of the two subunits of integration host factor, a specific DNA-binding protein that functions in genetic recombination as well as in transcriptional and translational control. This chain is Integration host factor subunit alpha, found in Ectopseudomonas mendocina (strain ymp) (Pseudomonas mendocina).